The sequence spans 520 residues: Ribonuclease Y (520 aa).

Residues 3–23 (FILVLCTVSSLFVGGGTGIFL) traverse the membrane as a helical segment. Residues 209–272 (TVTAVTLPSE…QVAKMALERL (64 aa)) form the KH domain. In terms of domain architecture, HD spans 335 to 429 (VLRHSIEVAS…VQASDCLSGA (95 aa)).

Belongs to the RNase Y family.

The protein localises to the cell membrane. In terms of biological role, endoribonuclease that initiates mRNA decay. This is Ribonuclease Y from Lawsonia intracellularis (strain PHE/MN1-00).